Here is a 191-residue protein sequence, read N- to C-terminus: Large ribosomal subunit protein uL3 (191 aa).

The disordered stretch occupies residues 119–138 (AAHGSRFHRRPGSIGNREWP).

The protein belongs to the universal ribosomal protein uL3 family. Part of the 50S ribosomal subunit. Forms a cluster with proteins L14 and L19.

One of the primary rRNA binding proteins, it binds directly near the 3'-end of the 23S rRNA, where it nucleates assembly of the 50S subunit. The chain is Large ribosomal subunit protein uL3 (rplC) from Helicobacter pylori (strain ATCC 700392 / 26695) (Campylobacter pylori).